Here is a 425-residue protein sequence, read N- to C-terminus: G protein-activated inward rectifier potassium channel 2 (425 aa).

The Cytoplasmic portion of the chain corresponds to 1–91 (MTMAKLTESM…IFTTLVDLKW (91 aa)). Ser18 and Ser25 each carry phosphoserine. The chain crosses the membrane as a helical span at residues 92–116 (RFNLLIFVMVYTVTWLFFGMIWWLI). At 117–140 (AYIRGDMDHIEDPSWTPCVTNLNG) the chain is on the extracellular side. The segment at residues 141 to 152 (FVSAFLFSIETE) is an intramembrane region (helical; Pore-forming). The pore-forming intramembrane region spans 153–159 (TTIGYGY). The Selectivity filter motif lies at 154 to 159 (TIGYGY). Over 160-168 (RVITDKCPE) the chain is Extracellular. Residues 169–190 (GIILLLIQSVLGSIVNAFMVGC) form a helical membrane-spanning segment. At 191–425 (MFVKISQPKK…VANLENESKV (235 aa)) the chain is on the cytoplasmic side. A disordered region spans residues 392–425 (NQHAELETEEEEKNPEELTERNGDVANLENESKV). The short motif at 422-425 (ESKV) is the PDZ-binding element.

It belongs to the inward rectifier-type potassium channel (TC 1.A.2.1) family. KCNJ6 subfamily. As to quaternary structure, associates with KCNJ3/GIRK1 or KCNJ5/GRIK4 to form a G-protein-activated heteromultimer pore-forming unit. The resulting inward current is much larger. Interacts (via PDZ-binding motif) with SNX27 (via PDZ domain); the interaction is required for recycling to the plasma membrane when endocytosed and prevent degradation in lysosomes. As to expression, pancreatic beta cells and brain.

Its subcellular location is the membrane. The enzyme catalyses K(+)(in) = K(+)(out). Activated by phosphatidylinositol 4,5 biphosphate (PtdIns(4,5)P2). In terms of biological role, inward rectifier potassium channels are characterized by a greater tendency to allow potassium to flow into the cell rather than out of it. Their voltage dependence is regulated by the concentration of extracellular potassium; as external potassium is raised, the voltage range of the channel opening shifts to more positive voltages. The inward rectification is mainly due to the blockage of outward current by internal magnesium. This potassium channel may be involved in the regulation of insulin secretion by glucose and/or neurotransmitters acting through G-protein-coupled receptors. The protein is G protein-activated inward rectifier potassium channel 2 (Kcnj6) of Rattus norvegicus (Rat).